Consider the following 218-residue polypeptide: Glutathione S-transferase Mu 7 (218 aa).

Positions 2–88 (PMTLGYWDIR…YLGRKHNLCG (87 aa)) constitute a GST N-terminal domain. Glutathione-binding positions include 7-8 (YW), 46-50 (WLNEK), 59-60 (NL), and 72-73 (QS). One can recognise a GST C-terminal domain in the interval 90-208 (TEEERIRVDI…KSSRFLPRPL (119 aa)). Tyr116 is a substrate binding site.

This sequence belongs to the GST superfamily. Mu family. In terms of assembly, homodimer.

The protein localises to the cytoplasm. It catalyses the reaction RX + glutathione = an S-substituted glutathione + a halide anion + H(+). Functionally, conjugation of reduced glutathione to a wide number of exogenous and endogenous hydrophobic electrophiles. In Rattus norvegicus (Rat), this protein is Glutathione S-transferase Mu 7.